Reading from the N-terminus, the 57-residue chain is Beta-defensin 3 (57 aa).

Pyrrolidone carboxylic acid is present on glutamine 16. Intrachain disulfides connect cysteine 24–cysteine 53, cysteine 31–cysteine 46, and cysteine 36–cysteine 54.

This sequence belongs to the beta-defensin family. Neutrophilic granules.

The protein localises to the secreted. Its function is as follows. Has bactericidal activity. Active against E.coli ML35 and S.aureus 502A. The protein is Beta-defensin 3 (DEFB3) of Bos taurus (Bovine).